The primary structure comprises 127 residues: Glycine cleavage system H protein (127 aa).

The Lipoyl-binding domain maps to 24–106 (TVTVGITDHA…FEGAWIAKIK (83 aa)). An N6-lipoyllysine modification is found at lysine 65.

The protein belongs to the GcvH family. In terms of assembly, the glycine cleavage system is composed of four proteins: P, T, L and H. The cofactor is (R)-lipoate.

Its function is as follows. The glycine cleavage system catalyzes the degradation of glycine. The H protein shuttles the methylamine group of glycine from the P protein to the T protein. The chain is Glycine cleavage system H protein from Marinomonas sp. (strain MWYL1).